The sequence spans 585 residues: A-type ATP synthase subunit A (585 aa).

231–238 is an ATP binding site; the sequence is GPFGSGKT.

It belongs to the ATPase alpha/beta chains family. As to quaternary structure, has multiple subunits with at least A(3), B(3), C, D, E, F, H, I and proteolipid K(x).

The protein localises to the cell membrane. It catalyses the reaction ATP + H2O + 4 H(+)(in) = ADP + phosphate + 5 H(+)(out). Its function is as follows. Component of the A-type ATP synthase that produces ATP from ADP in the presence of a proton gradient across the membrane. The A chain is the catalytic subunit. This is A-type ATP synthase subunit A from Thermococcus gammatolerans (strain DSM 15229 / JCM 11827 / EJ3).